The following is a 449-amino-acid chain: Ribulose bisphosphate carboxylase large chain (449 aa).

Positions 1–2 (MS) are excised as a propeptide. Position 3 is an N-acetylproline (Pro-3). Lys-14 bears the N6,N6,N6-trimethyllysine mark. Asn-123 and Thr-173 together coordinate substrate. Catalysis depends on Lys-175, which acts as the Proton acceptor. Lys-177 is a substrate binding site. Lys-201, Asp-203, and Glu-204 together coordinate Mg(2+). Lys-201 bears the N6-carboxylysine mark. His-294 serves as the catalytic Proton acceptor. Residues Xaa-295, His-327, and Ser-379 each coordinate substrate.

Belongs to the RuBisCO large chain family. Type I subfamily. Heterohexadecamer of 8 large chains and 8 small chains; disulfide-linked. The disulfide link is formed within the large subunit homodimers. Requires Mg(2+) as cofactor. In terms of processing, the disulfide bond which can form in the large chain dimeric partners within the hexadecamer appears to be associated with oxidative stress and protein turnover.

The protein resides in the plastid. The protein localises to the chloroplast. The enzyme catalyses 2 (2R)-3-phosphoglycerate + 2 H(+) = D-ribulose 1,5-bisphosphate + CO2 + H2O. It carries out the reaction D-ribulose 1,5-bisphosphate + O2 = 2-phosphoglycolate + (2R)-3-phosphoglycerate + 2 H(+). In terms of biological role, ruBisCO catalyzes two reactions: the carboxylation of D-ribulose 1,5-bisphosphate, the primary event in carbon dioxide fixation, as well as the oxidative fragmentation of the pentose substrate in the photorespiration process. Both reactions occur simultaneously and in competition at the same active site. The sequence is that of Ribulose bisphosphate carboxylase large chain from Salacia pallescens.